The chain runs to 120 residues: Immunogenic miracidial antigen 5D (120 aa).

A disordered region spans residues 41–120 (HIDVGDEDYH…PKKYGSGYKH (80 aa)). Over residues 45-66 (GDEDYHDGDDDVDYTDDVDDVD) the composition is skewed to acidic residues.

It belongs to the immunogenic miracidial antigen family.

The sequence is that of Immunogenic miracidial antigen 5D (5D) from Schistosoma japonicum (Blood fluke).